The primary structure comprises 364 residues: MKKNNRVVVGMSGGVDSSVSAYLLKEQGFDVIGVTMQIWQDKDEEAVRVEGGCCSLSAVNDARRVANKIGIKYYVMNFKDVFKEKVIDYFVDEYLRGRTPNPCIACNKYIKFEELLKRAWMIDAYYVATGHYAVKEYDEERGRYLLKKSVDTSKDQTYVLYNLTQTQLEHILFPLGKYKKDEVRELAKNLGLPVASKPDSQEICFVTDNDYGKFIRENAKEEIKPGEFRDTRGRFLGYHKGIIHYTIGQRKGLGISVGKPLYVVDIDAENNVVVLGYGDEVFGDELISYNNNFISIDKLEREMRVKAKIRYNAKEQDAVIRPLEDGKVFVKFDNPQRAITPGQSVVFYDGDIVVGGGTIERKVR.

ATP-binding positions include 10 to 17 (GMSGGVDS) and Met-36. Catalysis depends on Cys-106, which acts as the Nucleophile. Cysteines 106 and 204 form a disulfide. Gly-130 is an ATP binding site. The tract at residues 154–156 (KDQ) is interaction with tRNA. The Cysteine persulfide intermediate role is filled by Cys-204. The interval 310 to 311 (RY) is interaction with tRNA.

It belongs to the MnmA/TRMU family.

The protein localises to the cytoplasm. The catalysed reaction is S-sulfanyl-L-cysteinyl-[protein] + uridine(34) in tRNA + AH2 + ATP = 2-thiouridine(34) in tRNA + L-cysteinyl-[protein] + A + AMP + diphosphate + H(+). Catalyzes the 2-thiolation of uridine at the wobble position (U34) of tRNA, leading to the formation of s(2)U34. In Thermoanaerobacter sp. (strain X514), this protein is tRNA-specific 2-thiouridylase MnmA 1.